Here is a 277-residue protein sequence, read N- to C-terminus: Putative phosphoenolpyruvate synthase regulatory protein (277 aa).

Gly-157–Thr-164 is an ADP binding site.

The protein belongs to the pyruvate, phosphate/water dikinase regulatory protein family. PSRP subfamily.

It catalyses the reaction [pyruvate, water dikinase] + ADP = [pyruvate, water dikinase]-phosphate + AMP + H(+). The catalysed reaction is [pyruvate, water dikinase]-phosphate + phosphate + H(+) = [pyruvate, water dikinase] + diphosphate. Its function is as follows. Bifunctional serine/threonine kinase and phosphorylase involved in the regulation of the phosphoenolpyruvate synthase (PEPS) by catalyzing its phosphorylation/dephosphorylation. The protein is Putative phosphoenolpyruvate synthase regulatory protein of Klebsiella pneumoniae subsp. pneumoniae (strain ATCC 700721 / MGH 78578).